The primary structure comprises 396 residues: S100P-binding protein (396 aa).

The tract at residues 145 to 249 is disordered; sequence CDPVLDKDKI…RKNSGSHKSG (105 aa). Basic and acidic residues-rich tracts occupy residues 148 to 161 and 168 to 185; these read VLDK…KETE and EQTR…RCTE. Composition is skewed to polar residues over residues 202 to 215 and 227 to 246; these read SSPS…TASD and VFSQ…SGSH.

Interacts with S100P.

The protein resides in the nucleus. This is S100P-binding protein from Mus musculus (Mouse).